The following is a 210-amino-acid chain: Glutathione S-transferase P 2 (210 aa).

In terms of domain architecture, GST N-terminal spans 1-82 (SGYTLTYFPL…LLARYGLSGS (82 aa)). Residues Tyr7, Arg13, Trp38, Lys46, 53–54 (QI), and 66–67 (QS) contribute to the glutathione site. Positions 83–204 (NEREIAINEM…KSEGRKRRPI (122 aa)) constitute a GST C-terminal domain.

This sequence belongs to the GST superfamily. Pi family. In terms of assembly, homodimer. In terms of tissue distribution, liver, kidney, muscle, skin, lung and ovary.

It carries out the reaction RX + glutathione = an S-substituted glutathione + a halide anion + H(+). Conjugation of reduced glutathione to a wide number of exogenous and endogenous hydrophobic electrophiles. The sequence is that of Glutathione S-transferase P 2 from Bufo bufo (European toad).